The following is a 169-amino-acid chain: Phycobiliprotein beta chain (169 aa).

Position 72 is an N4-methylasparagine (N72). Position 82 (C82) interacts with (2R,3E)-phycocyanobilin.

It belongs to the phycobiliprotein family. As to quaternary structure, heterodimer of an alpha and a beta chain. In terms of processing, contains one covalently linked bilin chromophore.

Its subcellular location is the cellular thylakoid membrane. Light-harvesting photosynthetic bile pigment-protein from the phycobiliprotein complex. This is a protein functionally equivalent to, but with weaker absorbance than, allophycocyanin beta chain. The sequence is that of Phycobiliprotein beta chain (apcD) from Mastigocladus laminosus (Fischerella sp.).